The sequence spans 610 residues: Zinc metalloproteinase-disintegrin-like acurhagin (610 aa).

A signal peptide spans 1 to 20 (MIQVLLVTICLAAFPYQGSS). Residues 21–191 (IILESGDVND…ISQLNLIPEQ (171 aa)) constitute a propeptide that is removed on maturation. At Gln-192 the chain carries Pyrrolidone carboxylic acid. The Peptidase M12B domain occupies 198–394 (KYVETVVVVD…HNPECIDNEP (197 aa)). Residues Glu-201 and Asp-285 each coordinate Ca(2+). Intrachain disulfides connect Cys-309–Cys-389, Cys-349–Cys-373, and Cys-351–Cys-356. Residue His-334 participates in Zn(2+) binding. The active site involves Glu-335. Zn(2+) is bound by residues His-338 and His-344. Residue Asn-372 is glycosylated (N-linked (GlcNAc...) asparagine). Residues Cys-389, Asn-392, Asn-407, Leu-409, Glu-411, Glu-414, and Asp-417 each coordinate Ca(2+). Residues 402-488 (PPLCGNELLE…ECPADVFHKN (87 aa)) form the Disintegrin domain. Cystine bridges form between Cys-405–Cys-434, Cys-416–Cys-429, Cys-418–Cys-424, Cys-428–Cys-451, Cys-442–Cys-448, Cys-447–Cys-473, Cys-460–Cys-480, Cys-467–Cys-499, Cys-492–Cys-504, Cys-511–Cys-561, Cys-526–Cys-572, Cys-539–Cys-549, Cys-556–Cys-598, and Cys-592–Cys-603. The short motif at 466–468 (ECD) is the D/ECD-tripeptide element. Ca(2+) is bound by residues Asp-468, Pro-469, Glu-471, Asp-483, and Val-484.

It belongs to the venom metalloproteinase (M12B) family. P-III subfamily. P-IIIa sub-subfamily. Monomer. Requires Zn(2+) as cofactor. N-glycosylated. In terms of tissue distribution, expressed by the venom gland.

Its subcellular location is the secreted. The proteinase activity is slightly enhanced by Ca(2+) and Mg(2+), but is completely inhibited by Zn(2+). Is completely inhibited by phenanthroline and EDTA. Not inhibited by PMSF. Functionally, snake venom zinc metalloprotease that causes hemorrhage and dose-dependently inhibits platelet aggregation triggered by collagen. This inhibition is due to its binding to glycoprotein VI (GP6) and collagen. The binding to GP6 results in inhibition of the signaling pathway (decrease of tyrosine phosphorylation of signaling proteins such as Syk, LAT, PI3-K and PLCgamma2). Preferentially cleaves alpha chain (FGA) of fibrinogen, followed by beta chain (FGB). Also degrades the extracellular matrix protein fibronectin (FN1), and cleaves collagen and von Willebrand factor (VWF). The polypeptide is Zinc metalloproteinase-disintegrin-like acurhagin (Deinagkistrodon acutus (Hundred-pace snake)).